The following is a 153-amino-acid chain: Ribosome maturation factor RimP (153 aa).

This sequence belongs to the RimP family.

The protein resides in the cytoplasm. Required for maturation of 30S ribosomal subunits. This is Ribosome maturation factor RimP from Marinomonas sp. (strain MWYL1).